The primary structure comprises 40 residues: Photosystem II reaction center protein J (40 aa).

The helical transmembrane segment at 8–28 (IPLWLVALVAGTGVLVVVGLF) threads the bilayer.

This sequence belongs to the PsbJ family. As to quaternary structure, PSII is composed of 1 copy each of membrane proteins PsbA, PsbB, PsbC, PsbD, PsbE, PsbF, PsbH, PsbI, PsbJ, PsbK, PsbL, PsbM, PsbT, PsbX, PsbY, PsbZ, Psb30/Ycf12, peripheral proteins PsbO, CyanoQ (PsbQ), PsbU, PsbV and a large number of cofactors. It forms dimeric complexes.

Its subcellular location is the cellular thylakoid membrane. One of the components of the core complex of photosystem II (PSII). PSII is a light-driven water:plastoquinone oxidoreductase that uses light energy to abstract electrons from H(2)O, generating O(2) and a proton gradient subsequently used for ATP formation. It consists of a core antenna complex that captures photons, and an electron transfer chain that converts photonic excitation into a charge separation. The polypeptide is Photosystem II reaction center protein J (Trichodesmium erythraeum (strain IMS101)).